Consider the following 315-residue polypeptide: MARRSRGRFIDGIVLLDKDTGMSSNFALQRVKRFFNANKAGHTGALDPLATGMLPICLGEATKFSQHLLDADKRYLVTAKLGQRTDTSDSDGEIVQTREVNFTQEQLDTALEYFRGETMQVPSMYSALKYQGQPLYKYAREGIEVPREARPINVFELNFISLEGDELTLDIHCSKGTYIRTITDDLGEMLGCGAHVIMLRRTQVAGYPYDKMVSLKQLEELVAKADAESLTLSEVLDPLLLPMDTAVSGFKEINVSDELATYLMNGNPVQVANLPVDELVRITIGDARQFVGIGQMNDDGLLAPKRLIVLREPQD.

The active-site Nucleophile is the D47.

This sequence belongs to the pseudouridine synthase TruB family. Type 1 subfamily.

The enzyme catalyses uridine(55) in tRNA = pseudouridine(55) in tRNA. Responsible for synthesis of pseudouridine from uracil-55 in the psi GC loop of transfer RNAs. The sequence is that of tRNA pseudouridine synthase B from Shewanella pealeana (strain ATCC 700345 / ANG-SQ1).